The following is a 250-amino-acid chain: Putative ABC transporter ATP-binding protein YjkB (250 aa).

One can recognise an ABC transporter domain in the interval 13-245; sequence ISFRSVRKSY…PQHEAAKEFL (233 aa). 49–56 lines the ATP pocket; that stretch reads GPSGSGKS.

It belongs to the ABC transporter superfamily.

The sequence is that of Putative ABC transporter ATP-binding protein YjkB (yjkB) from Bacillus subtilis (strain 168).